A 206-amino-acid chain; its full sequence is LexA repressor (206 aa).

The segment at residues 28–48 (RAEIASELGFKSANAAEEHLK) is a DNA-binding region (H-T-H motif). Catalysis depends on for autocatalytic cleavage activity residues S122 and K160.

Belongs to the peptidase S24 family. In terms of assembly, homodimer.

The catalysed reaction is Hydrolysis of Ala-|-Gly bond in repressor LexA.. Functionally, represses a number of genes involved in the response to DNA damage (SOS response), including recA and lexA. In the presence of single-stranded DNA, RecA interacts with LexA causing an autocatalytic cleavage which disrupts the DNA-binding part of LexA, leading to derepression of the SOS regulon and eventually DNA repair. In Tolumonas auensis (strain DSM 9187 / NBRC 110442 / TA 4), this protein is LexA repressor.